The following is a 362-amino-acid chain: Chorismate synthase (362 aa).

Position 47 (R47) interacts with NADP(+). Residues 124–126, G286, 301–305, and R327 contribute to the FMN site; these read RSS and KPTAT.

It belongs to the chorismate synthase family. As to quaternary structure, homotetramer. It depends on FMNH2 as a cofactor.

It catalyses the reaction 5-O-(1-carboxyvinyl)-3-phosphoshikimate = chorismate + phosphate. It functions in the pathway metabolic intermediate biosynthesis; chorismate biosynthesis; chorismate from D-erythrose 4-phosphate and phosphoenolpyruvate: step 7/7. Its function is as follows. Catalyzes the anti-1,4-elimination of the C-3 phosphate and the C-6 proR hydrogen from 5-enolpyruvylshikimate-3-phosphate (EPSP) to yield chorismate, which is the branch point compound that serves as the starting substrate for the three terminal pathways of aromatic amino acid biosynthesis. This reaction introduces a second double bond into the aromatic ring system. This chain is Chorismate synthase, found in Synechococcus elongatus (strain ATCC 33912 / PCC 7942 / FACHB-805) (Anacystis nidulans R2).